The primary structure comprises 311 residues: Methionyl-tRNA formyltransferase (311 aa).

Ser112–Pro115 is a binding site for (6S)-5,6,7,8-tetrahydrofolate.

Belongs to the Fmt family.

The catalysed reaction is L-methionyl-tRNA(fMet) + (6R)-10-formyltetrahydrofolate = N-formyl-L-methionyl-tRNA(fMet) + (6S)-5,6,7,8-tetrahydrofolate + H(+). Its function is as follows. Attaches a formyl group to the free amino group of methionyl-tRNA(fMet). The formyl group appears to play a dual role in the initiator identity of N-formylmethionyl-tRNA by promoting its recognition by IF2 and preventing the misappropriation of this tRNA by the elongation apparatus. This is Methionyl-tRNA formyltransferase from Rhizobium meliloti (strain 1021) (Ensifer meliloti).